The primary structure comprises 265 residues: U6 snRNA phosphodiesterase 1 (265 aa).

The segment at 1–22 (MSLVCYESSSSGEDDDETISDN) is disordered. Histidine 109 serves as the catalytic Proton acceptor. Residues 109–111 (HLS) and 195–201 (DFLLHIS) each bind AMP. Residue 197 to 201 (LLHIS) participates in UMP binding. Histidine 199 functions as the Proton donor in the catalytic mechanism.

Belongs to the 2H phosphoesterase superfamily. USB1 family.

The protein localises to the nucleus. It carries out the reaction a 3'-end uridylyl-uridine-RNA = a 3'-end 2',3'-cyclophospho-uridine-RNA + uridine. Functionally, 3'-5' RNA exonuclease that trims the 3' end of oligo(U) tracts of the pre-U6 small nuclear RNA (snRNA) molecule, leading to the formation of a U6 snRNA 3' end-terminated with a 2',3'-cyclic phosphate.d. Participates in the U6 snRNA 3' end processing that prevents U6 snRNA degradation. The sequence is that of U6 snRNA phosphodiesterase 1 from Schizosaccharomyces pombe (strain 972 / ATCC 24843) (Fission yeast).